Here is a 549-residue protein sequence, read N- to C-terminus: Glucose-6-phosphate isomerase (549 aa).

N6-acetyllysine is present on residues Lys80, Lys228, and Lys234. The active-site Proton donor is Glu355. Residues His386 and Lys514 contribute to the active site.

This sequence belongs to the GPI family.

It is found in the cytoplasm. It carries out the reaction alpha-D-glucose 6-phosphate = beta-D-fructose 6-phosphate. It participates in carbohydrate biosynthesis; gluconeogenesis. The protein operates within carbohydrate degradation; glycolysis; D-glyceraldehyde 3-phosphate and glycerone phosphate from D-glucose: step 2/4. Catalyzes the reversible isomerization of glucose-6-phosphate to fructose-6-phosphate. The chain is Glucose-6-phosphate isomerase from Shigella flexneri serotype 5b (strain 8401).